Reading from the N-terminus, the 206-residue chain is Ribosomal RNA large subunit methyltransferase E (206 aa).

Residues glycine 60, tryptophan 62, aspartate 80, aspartate 96, and aspartate 121 each contribute to the S-adenosyl-L-methionine site. Residue lysine 161 is the Proton acceptor of the active site.

It belongs to the class I-like SAM-binding methyltransferase superfamily. RNA methyltransferase RlmE family.

Its subcellular location is the cytoplasm. The enzyme catalyses uridine(2552) in 23S rRNA + S-adenosyl-L-methionine = 2'-O-methyluridine(2552) in 23S rRNA + S-adenosyl-L-homocysteine + H(+). Its function is as follows. Specifically methylates the uridine in position 2552 of 23S rRNA at the 2'-O position of the ribose in the fully assembled 50S ribosomal subunit. The sequence is that of Ribosomal RNA large subunit methyltransferase E from Legionella pneumophila (strain Lens).